Reading from the N-terminus, the 643-residue chain is Leukocyte immunoglobulin-like receptor subfamily B member 5 (643 aa).

The N-terminal stretch at 1–23 (MTLTLSVLICLGLNVGPRTCVQA) is a signal peptide. Residues 24–458 (GTLPKPTLWA…PQSGLGRHLG (435 aa)) are Extracellular-facing. Ig-like C2-type domains are found at residues 27–116 (PKPT…LELV), 111–228 (DPLE…SLLI), 224–313 (PSLL…DPLD), and 337–418 (GENV…LVVS). An intrachain disulfide couples C49 to C98. N-linked (GlcNAc...) asparagine glycosylation is present at N139. Disulfide bonds link C144–C195 and C244–C295. 2 N-linked (GlcNAc...) asparagine glycosylation sites follow: N279 and N339. Cysteines 344 and 395 form a disulfide. A compositionally biased stretch (low complexity) spans 417-433 (VSGPSGDPSLSPTGSTP). The segment at 417 to 449 (VSGPSGDPSLSPTGSTPTPGPEDQPLTPTGLDP) is disordered. The chain crosses the membrane as a helical span at residues 459–479 (VVTGVSVAFVLLLFLLLFLLL). The Cytoplasmic portion of the chain corresponds to 480–643 (RHRHQSKHRT…PSIYAPLAIH (164 aa)). Residues 493–643 (FYRPAGAAGP…PSIYAPLAIH (151 aa)) are disordered. The residue at position 514 (S514) is a Phosphoserine. Basic and acidic residues-rich tracts occupy residues 531-549 (TQPK…RDED), 557-567 (EVKHSRPRREM), and 579-592 (LDTK…DRQM). Residues 605–610 (VTYAQL) carry the ITIM motif 1 motif. Positions 615 to 631 (LRREATEPPPSQEREPP) are enriched in basic and acidic residues. Residues 635 to 640 (SIYAPL) carry the ITIM motif 2 motif.

It localises to the membrane. Functionally, may act as receptor for class I MHC antigens. The sequence is that of Leukocyte immunoglobulin-like receptor subfamily B member 5 (LILRB5) from Pan troglodytes (Chimpanzee).